A 240-amino-acid chain; its full sequence is Pyridoxine 5'-phosphate synthase (240 aa).

Position 7 (N7) interacts with 3-amino-2-oxopropyl phosphate. 9-10 (DH) provides a ligand contact to 1-deoxy-D-xylulose 5-phosphate. R18 is a 3-amino-2-oxopropyl phosphate binding site. H43 functions as the Proton acceptor in the catalytic mechanism. R45 and H50 together coordinate 1-deoxy-D-xylulose 5-phosphate. E70 functions as the Proton acceptor in the catalytic mechanism. A 1-deoxy-D-xylulose 5-phosphate-binding site is contributed by T100. H191 (proton donor) is an active-site residue. 3-amino-2-oxopropyl phosphate-binding positions include G192 and 213–214 (GH).

This sequence belongs to the PNP synthase family. Homooctamer; tetramer of dimers.

The protein resides in the cytoplasm. The enzyme catalyses 3-amino-2-oxopropyl phosphate + 1-deoxy-D-xylulose 5-phosphate = pyridoxine 5'-phosphate + phosphate + 2 H2O + H(+). It functions in the pathway cofactor biosynthesis; pyridoxine 5'-phosphate biosynthesis; pyridoxine 5'-phosphate from D-erythrose 4-phosphate: step 5/5. Its function is as follows. Catalyzes the complicated ring closure reaction between the two acyclic compounds 1-deoxy-D-xylulose-5-phosphate (DXP) and 3-amino-2-oxopropyl phosphate (1-amino-acetone-3-phosphate or AAP) to form pyridoxine 5'-phosphate (PNP) and inorganic phosphate. The protein is Pyridoxine 5'-phosphate synthase of Coxiella burnetii (strain Dugway 5J108-111).